The chain runs to 427 residues: Mucorpepsin (427 aa).

Residues 1-22 (MLFSKISSAILLTAASFALTSA) form the signal peptide. A propeptide spans 23–66 (RPVSKQSDADDKLLALPLTSVNRKYSQTKHGQQAAEKLGGIKAF) (activation peptide). One can recognise a Peptidase A1 domain in the interval 86–418 (YAIPVSIGTP…DFGKNRIGFA (333 aa)). Aspartate 104 is an active-site residue. A disulfide bridge connects residues cysteine 117 and cysteine 123. An N-linked (GlcNAc...) asparagine glycan is attached at asparagine 254. Residue aspartate 303 is part of the active site. Cysteine 338 and cysteine 382 are oxidised to a cystine.

Belongs to the peptidase A1 family.

It catalyses the reaction Hydrolysis of proteins, favoring hydrophobic residues at P1 and P1'. Clots milk. Does not accept Lys at P1, and hence does not activate trypsinogen.. Functionally, this enzyme, capable of clotting milk is frequently used for cheese production. In Rhizomucor pusillus, this protein is Mucorpepsin.